Consider the following 220-residue polypeptide: Large ribosomal subunit protein uL6c (220 aa).

Residues 1-38 constitute a chloroplast transit peptide; it reads MSLPLPSHMKSVFLGMKVEISTSVPVTRIGFWRKSVDC.

As to quaternary structure, component of the chloroplast large ribosomal subunit (LSU). Mature 70S chloroplast ribosomes of higher plants consist of a small (30S) and a large (50S) subunit. The 30S small subunit contains 1 molecule of ribosomal RNA (16S rRNA) and 24 different proteins. The 50S large subunit contains 3 rRNA molecules (23S, 5S and 4.5S rRNA) and 33 different proteins.

The protein localises to the plastid. It localises to the chloroplast. In terms of biological role, component of the chloroplast ribosome (chloro-ribosome), a dedicated translation machinery responsible for the synthesis of chloroplast genome-encoded proteins, including proteins of the transcription and translation machinery and components of the photosynthetic apparatus. This is Large ribosomal subunit protein uL6c (RPL6) from Spinacia oleracea (Spinach).